A 367-amino-acid chain; its full sequence is uncharacterized protein (367 aa).

The segment at 333–367 (RERRPTLNAQRAHAAAQQQPRRRNRRQQGTGASAS) is disordered. Over residues 341-351 (AQRAHAAAQQQ) the composition is skewed to low complexity.

This is an uncharacterized protein from Amazona oratrix (yellow-headed parrot).